The primary structure comprises 2381 residues: Highly reducing polyketide synthase virA (2381 aa).

Residues 1–420 (MDALHLACHL…GANGHVILES (420 aa)) enclose the Ketosynthase family 3 (KS3) domain. Residues Cys171, His306, and His344 each act as for beta-ketoacyl synthase activity in the active site. The tract at residues 535–851 (VFTGQGAQYA…PYSPTLVRKE (317 aa)) is malonyl-CoA:ACP transacylase (MAT) domain. Ser629 serves as the catalytic For malonyltransferase activity. The tract at residues 920–1064 (HELLGTRATA…GSIRVMESTL (145 aa)) is N-terminal hotdog fold. A dehydratase (DH) domain region spans residues 920 to 1232 (HELLGTRATA…HLRMNEYTGK (313 aa)). Residues 920 to 1235 (HELLGTRATA…MNEYTGKAPV (316 aa)) enclose the PKS/mFAS DH domain. The active-site Proton acceptor; for dehydratase activity is His952. The C-terminal hotdog fold stretch occupies residues 1078–1235 (HEVWGMSRWY…MNEYTGKAPV (158 aa)). The active-site Proton donor; for dehydratase activity is the Asp1144. The enoyl reductase (ER) domain stretch occupies residues 1639–1956 (GMTDTIHFQQ…NKDRVGKVVV (318 aa)). The tract at residues 1981 to 2159 (TYLLVGCLGG…AVSVGLGMIS (179 aa)) is ketoreductase (KR) domain. Positions 2297–2375 (TMLDAILRLT…TLAEFIEEKL (79 aa)) constitute a Carrier domain. The residue at position 2334 (Ser2334) is an O-(pantetheine 4'-phosphoryl)serine.

Its pathway is secondary metabolite biosynthesis. In terms of biological role, highly reducing polyketide synthase; part of the gene cluster that mediates the biosynthesis of virensols and trichoxide, fungal natural products that contain or are derived from a salicylaldehyde core. The pathway begins with the synthesis of the reduced chain in virensol C by the highly reducing polyketide synthase virA via condensation of one acetate and 8 malonate units. VirA has interesting programming rules since the first 2 ketides are fully reduced, the 3 following ketides undergo beta-dehydration, and the last 3 ketides are only reduced to beta-hydroxys to yield the trihydroxy portion. The production of aldehyde virensol C by virA alone is surprising, since virA does not contain a reductase (R) domain that is typically associated with reductive product release in HRPKS. The cupin-domain enzyme virC is involved in enhancing virA product turnover. The short-chain dehydrogenase virB then oxidizes the C-7 alcohol of virensol C to a ketone, yielding virensol D. Virensol D is further transformed to salicylaldehyde 5-deoxyaurocitrin by the short-chain dehydrogenase virD. VirD catalyzes the dehydrogenation of C-3 to form the beta-ketone aldehyde, which is followed by the generation of the nucleophilic C-2 that is required for the intramolecular aldol condensation between C-2 and C-7, itself followed by dehydration and aromatization which leads to salicylaldehyde 5-deoxyaurocitrin. While the dehydrogenation of virensol D is definitely catalyzed by virD, the aldol condensation and dehydration may be uncatalyzed or assisted by virD. The short chain dehydrogenase virG then converts salicylaldehyde 5-deoxyaurocitrin into virensol B which is further hydroxylated by the cytochrome P450 monooxygenase virE to yield the hydroquinone virensol A. VirI then may oxidize virensol A to form the quinone, while virH performs the epoxidation. Finally, the two remaining short-chain dehydrogenases, virK and virL, are probably responsible for reducing the ketones to the corresponding alcohols to furnish the epoxycyclohexanol structure in trichoxide. In Hypocrea virens (strain Gv29-8 / FGSC 10586) (Gliocladium virens), this protein is Highly reducing polyketide synthase virA.